Here is a 242-residue protein sequence, read N- to C-terminus: uncharacterized protein (242 aa).

The S4 RNA-binding domain occupies 2 to 62 (EKAYKLLSVQ…VEKPSVIFED (61 aa)). The active site involves Asp-93.

It belongs to the pseudouridine synthase RluA family.

The catalysed reaction is a uridine in RNA = a pseudouridine in RNA. This is an uncharacterized protein from Helicobacter pylori (strain J99 / ATCC 700824) (Campylobacter pylori J99).